Reading from the N-terminus, the 320-residue chain is ADP/ATP translocase 4 (320 aa).

The Mitochondrial intermembrane segment spans residues 1 to 20; that stretch reads MSNESSKKQSSKKALFDPVS. Residues 19–111 form a Solcar 1 repeat; it reads VSFSKDLLAG…FAFKDKYKEL (93 aa). Residues 21–50 form a helical membrane-spanning segment; that stretch reads FSKDLLAGGVAAAVSKTAVAPIERVKLLLQ. The Mitochondrial matrix segment spans residues 51–87; sequence VQASSKQISPEARYKGMLDCLVRIPREQGFLSYWRGN. The chain crosses the membrane as a helical span at residues 88 to 112; sequence LANVIRYFPTQALNFAFKDKYKELF. The ADP site is built by Arg-93 and Lys-105. Over 113-122 the chain is Mitochondrial intermembrane; sequence MSGVNKEKQF. The helical transmembrane segment at 123 to 143 threads the bilayer; it reads WRWFLANLASGGAAGATSLCV. Solcar repeat units lie at residues 124 to 214 and 221 to 308; these read RWFL…VKGL and TPFL…IKEF. The Mitochondrial matrix segment spans residues 144 to 191; the sequence is VYPLDFARTRLGVDIGKGPEQRQFTGLGDCIMKIAKSDGLIGLYQGFG. A helical membrane pass occupies residues 192-212; the sequence is VSVQGIIVYRASYFGAYDTVK. Residues 213–223 are Mitochondrial intermembrane-facing; it reads GLLPKPKETPF. Residues 224 to 244 traverse the membrane as a helical segment; the sequence is LVSFIIAQIVTTCSGILSYPF. Over 245–284 the chain is Mitochondrial matrix; sequence DTVRRRMMMQSGESDRQYKGTIDCFLKIYRHEGVPAFFRG. Residue Arg-248 coordinates ADP. Residues 248–253 are important for transport activity; that stretch reads RRRMMM. Positions 248–253 match the Nucleotide carrier signature motif motif; it reads RRRMMM. Residues 285-302 traverse the membrane as a helical segment; it reads AFSNILRGTGGALVLVLY. Residues 303–320 lie on the Mitochondrial intermembrane side of the membrane; sequence DKIKEFLNIDVGGSSSGD.

Belongs to the mitochondrial carrier (TC 2.A.29) family. Monomer. As to expression, specifically expressed in undifferentiated embryonic stem cells and germ cells. Expression is down-regulated after embryonic stem cells differentiation. In adults, only expressed in developing gametes in testis. In testis, expressed at higher level in spermatocytes. Expression is probably associated with entry of the male germ cells into meiosis. Expressed at very low level in Sertoli cells.

The protein resides in the mitochondrion inner membrane. Its subcellular location is the membrane. The protein localises to the cell projection. It localises to the cilium. It is found in the flagellum membrane. It carries out the reaction ADP(in) + ATP(out) = ADP(out) + ATP(in). The catalysed reaction is dATP(out) + ADP(in) = dATP(in) + ADP(out). It catalyses the reaction dADP(in) + ADP(out) = dADP(out) + ADP(in). The enzyme catalyses H(+)(in) = H(+)(out). The matrix-open state (m-state) is inhibited by the membrane-permeable bongkrekic acid (BKA). The cytoplasmic-open state (c-state) is inhibited by the membrane-impermeable toxic inhibitor carboxyatractyloside (CATR). Proton transporter activity is inhibited by ADP:ATP antiporter activity. Its function is as follows. ADP:ATP antiporter that mediates import of ADP into the mitochondrial matrix for ATP synthesis, and export of ATP out to fuel the cell. Cycles between the cytoplasmic-open state (c-state) and the matrix-open state (m-state): operates by the alternating access mechanism with a single substrate-binding site intermittently exposed to either the cytosolic (c-state) or matrix (m-state) side of the inner mitochondrial membrane. Specifically required during spermatogenesis, probably to mediate ADP:ATP exchange in spermatocytes. Large ATP supplies from mitochondria may be critical for normal progression of spermatogenesis during early stages of meiotic prophase I, including DNA double-strand break repair and chromosomal synapsis. In addition to its ADP:ATP antiporter activity, also involved in mitochondrial uncoupling and mitochondrial permeability transition pore (mPTP) activity. Plays a role in mitochondrial uncoupling by acting as a proton transporter: proton transport uncouples the proton flows via the electron transport chain and ATP synthase to reduce the efficiency of ATP production and cause mitochondrial thermogenesis. Proton transporter activity is inhibited by ADP:ATP antiporter activity, suggesting that SLC25A31/ANT4 acts as a master regulator of mitochondrial energy output by maintaining a delicate balance between ATP production (ADP:ATP antiporter activity) and thermogenesis (proton transporter activity). Proton transporter activity requires free fatty acids as cofactor, but does not transport it. Among nucleotides, may also exchange ADP for dATP and dADP. Also plays a key role in mPTP opening, a non-specific pore that enables free passage of the mitochondrial membranes to solutes of up to 1.5 kDa, and which contributes to cell death. It is however unclear if SLC25A31/ANT4 constitutes a pore-forming component of mPTP or regulates it. The sequence is that of ADP/ATP translocase 4 from Mus musculus (Mouse).